The chain runs to 454 residues: Mogroside I-E synthase (454 aa).

The active-site Proton acceptor is the His-18. His-18 is an an anthocyanidin binding site. Catalysis depends on Asp-111, which acts as the Charge relay. His-144 is a binding site for an anthocyanidin. Residues Cys-259 and Cys-331 are joined by a disulfide bond. Positions 278, 331, 333, 351, 352, 353, and 356 each coordinate UDP-alpha-D-glucose. Ala-371 provides a ligand contact to an anthocyanidin. The UDP-alpha-D-glucose site is built by Asp-372 and Gln-373.

It belongs to the UDP-glycosyltransferase family. As to expression, highly expressed in young fruits 15 days after anthesis (15-DAA).

It carries out the reaction mogrol + UDP-alpha-D-glucose = mogroside IE + UDP + H(+). The protein operates within secondary metabolite biosynthesis; terpenoid biosynthesis. With respect to regulation, activity is increased by Mg(2+). Its function is as follows. UDP-glycosyltransferase involved in the biosynthesis of cucurbitacin and mogroside tetracyclic triterpene natural products (e.g. siamenoside I and mogrosides IV, V and VI). Cucurbitacins have cytotoxic properties and exhibit deterrent taste as a defense barrier against herbivores. Mogrosides are nonsugar highly oxygenated compounds used as high-intensity zero-calorie sweeteners; they also possess pharmacological properties such as regulating immunity, lowering blood sugar and lipid levels, protecting the liver, and acting as antioxidants and antitumor agents. Catalyzes the transfer of a glucose moiety to the C-3 hydroxyl of mogrol to form mogroside I-E. Besides mogrol, UGT74AC1 also shows activity in vitro with quercetin and naringenin as substrate. The protein is Mogroside I-E synthase of Siraitia grosvenorii (Monk's fruit).